The chain runs to 422 residues: Adenylosuccinate synthetase (422 aa).

Residues 11-17 (GDEGKGK) and 39-41 (GHT) each bind GTP. The active-site Proton acceptor is Asp12. Mg(2+) contacts are provided by Asp12 and Gly39. IMP contacts are provided by residues 12-15 (DEGK), 37-40 (NAGH), Thr129, Arg143, Asn219, Thr234, and Arg298. The active-site Proton donor is His40. 294 to 300 (VTTGRKR) contacts substrate. GTP contacts are provided by residues Arg300, 326–328 (KLD), and 411–413 (GTG).

This sequence belongs to the adenylosuccinate synthetase family. In terms of assembly, homodimer. Mg(2+) is required as a cofactor.

Its subcellular location is the cytoplasm. The catalysed reaction is IMP + L-aspartate + GTP = N(6)-(1,2-dicarboxyethyl)-AMP + GDP + phosphate + 2 H(+). Its pathway is purine metabolism; AMP biosynthesis via de novo pathway; AMP from IMP: step 1/2. In terms of biological role, plays an important role in the de novo pathway and in the salvage pathway of purine nucleotide biosynthesis. Catalyzes the first committed step in the biosynthesis of AMP from IMP. This chain is Adenylosuccinate synthetase, found in Talaromyces stipitatus (strain ATCC 10500 / CBS 375.48 / QM 6759 / NRRL 1006) (Penicillium stipitatum).